The sequence spans 611 residues: MSKIIGIDLGTTNSCVAVMEGGEPKVIPNPEGNRTTPSVVAFKNEERQVGEVAKRQAITNPNTIMSVKRHMGTDYKVEIEGKEYTPQEISAIILQNLKASAEAYLGETVTKAVITVPAYFNDAERQATKDAGRIAGLEVERIINEPTAAALAYGLEKQDEEQKILVYDLGGGTFDVSILELADGTFEVISTAGDNRLGGDDFDQVIIDHLVAEFKKENNIDLSQDKMALQRLKDAAEKAKKDLSGVTQTQISLPFISAGAAGPLHLELTLTRAKFEELSANLVERTLEPTRRALKDAGLSASELDRVILVGGSTRIPAVQEAIKRETGKEPYKGVNPDEVVALGAAVQGGVLTGDVEGVLLLDVTPLSLGIETMGGVFTKLIERNTTIPTSKSQVFSTAADNQPAVDIHVLQGERPMSADNKTLGRFQLTDIPPAPRGIPQIEVTFDIDANGIVNVRAKDLGTSKEQAITIQSSSGLSDEEVDRMVKEAEANADADQKRKEEVELRNEADQLVFQTDKVVKDLEGKVDAAEVAKATEAKEALQAAIEKNELEEIRAKKDALQEIVQQLTVKLYEQAQAAAGQAEGAQGAQDAGAKKDNVVDAEFEEVKEDK.

Phosphothreonine; by autocatalysis is present on threonine 173. The segment covering 579 to 592 (AAGQAEGAQGAQDA) has biased composition (low complexity). The segment at 579-598 (AAGQAEGAQGAQDAGAKKDN) is disordered.

Belongs to the heat shock protein 70 family.

Its function is as follows. Acts as a chaperone. The protein is Chaperone protein DnaK of Bacillus cereus (strain AH187).